The following is a 311-amino-acid chain: Ribosomal RNA small subunit methyltransferase H (311 aa).

S-adenosyl-L-methionine is bound by residues Ala-32–His-34, Asp-52, Phe-79, Asp-100, and Gln-107.

Belongs to the methyltransferase superfamily. RsmH family.

The protein resides in the cytoplasm. It carries out the reaction cytidine(1402) in 16S rRNA + S-adenosyl-L-methionine = N(4)-methylcytidine(1402) in 16S rRNA + S-adenosyl-L-homocysteine + H(+). Specifically methylates the N4 position of cytidine in position 1402 (C1402) of 16S rRNA. This Staphylococcus haemolyticus (strain JCSC1435) protein is Ribosomal RNA small subunit methyltransferase H.